The primary structure comprises 188 residues: Putative pre-16S rRNA nuclease (188 aa).

Residues 144–188 (HAPGRVVAGPKGRRKARHRGQGGTGTEQQADAGGRARPHATEGKG) form a disordered region. Residues 154–163 (KGRRKARHRG) are compositionally biased toward basic residues.

This sequence belongs to the YqgF nuclease family.

The protein localises to the cytoplasm. Could be a nuclease involved in processing of the 5'-end of pre-16S rRNA. This chain is Putative pre-16S rRNA nuclease, found in Kineococcus radiotolerans (strain ATCC BAA-149 / DSM 14245 / SRS30216).